Reading from the N-terminus, the 876-residue chain is Eukaryotic translation initiation factor 3 subunit C (876 aa).

Disordered regions lie at residues 1–25 (MSRF…VVRA) and 154–233 (SXFR…IREQ). The segment covering 11 to 20 (SESESSSEDE) has biased composition (acidic residues). 2 stretches are compositionally biased toward basic and acidic residues: residues 154-172 (SXFR…KDSS) and 182-192 (KPIKEKPKPEP). The span at 206-219 (SMDWASSSSDSSFS) shows a compositional bias: low complexity. The PCI domain occupies 632–808 (FHMHINLELL…ECAILHRSEP (177 aa)). Positions 839 to 876 (FFQRGGAQRGEGRQRERPREGWNRRTRNRRRDDERADD) are disordered. Basic and acidic residues predominate over residues 848–861 (GEGRQRERPREGWN).

Belongs to the eIF-3 subunit C family. As to quaternary structure, component of the eukaryotic translation initiation factor 3 (eIF-3) complex.

It is found in the cytoplasm. In terms of biological role, component of the eukaryotic translation initiation factor 3 (eIF-3) complex, which is involved in protein synthesis of a specialized repertoire of mRNAs and, together with other initiation factors, stimulates binding of mRNA and methionyl-tRNAi to the 40S ribosome. The eIF-3 complex specifically targets and initiates translation of a subset of mRNAs involved in cell proliferation. In Bombyx mori (Silk moth), this protein is Eukaryotic translation initiation factor 3 subunit C.